A 313-amino-acid chain; its full sequence is Beta-ribofuranosylphenol 5'-phosphate synthase (313 aa).

This sequence belongs to the beta-RFA-P synthase family. In terms of assembly, homodimer.

The enzyme catalyses 5-phospho-alpha-D-ribose 1-diphosphate + 4-hydroxybenzoate + H(+) = 4-(beta-D-ribofuranosyl)phenol 5'-phosphate + CO2 + diphosphate. The catalysed reaction is 4-aminobenzoate + 5-phospho-alpha-D-ribose 1-diphosphate + H(+) = 4-(beta-D-ribofuranosyl)aminobenzene 5'-phosphate + CO2 + diphosphate. It functions in the pathway cofactor biosynthesis; 5,6,7,8-tetrahydromethanopterin biosynthesis. Functionally, catalyzes the condensation of 4-hydroxybenzoate (HB) with 5-phospho-alpha-D-ribose 1-diphosphate (PRPP) to produce beta-ribofuranosylphenol 5'-phosphate (beta-RFH-P). Also catalyzes the condensation of 4-aminobenzoate (pABA) with PRPP to produce beta-ribofuranosylaminobenzene 5'-phosphate (beta-RFA-P). The protein is Beta-ribofuranosylphenol 5'-phosphate synthase of Archaeoglobus fulgidus (strain ATCC 49558 / DSM 4304 / JCM 9628 / NBRC 100126 / VC-16).